A 508-amino-acid chain; its full sequence is Maturase K (508 aa).

This sequence belongs to the intron maturase 2 family. MatK subfamily.

The protein localises to the plastid. It is found in the chloroplast. Usually encoded in the trnK tRNA gene intron. Probably assists in splicing its own and other chloroplast group II introns. The protein is Maturase K of Coronilla varia (Crown vetch).